The following is a 168-amino-acid chain: Small ribosomal subunit protein bS16 (168 aa).

The interval Leu-110–Gly-168 is disordered.

The protein belongs to the bacterial ribosomal protein bS16 family.

The sequence is that of Small ribosomal subunit protein bS16 from Mycobacterium sp. (strain JLS).